A 44-amino-acid chain; its full sequence is Brevinin-1PLa (44 aa).

Positions 1–18 (NAEEERRDEPDETDVEVE) are excised as a propeptide. A disulfide bond links Cys-38 and Cys-44.

In terms of tissue distribution, expressed by the skin glands.

The protein localises to the secreted. Its function is as follows. Antimicrobial peptide. This chain is Brevinin-1PLa, found in Lithobates palustris (Pickerel frog).